Reading from the N-terminus, the 719-residue chain is Developmental regulator flbA (719 aa).

Over residues 1-17 (MPTSISTAPLSQGSPPS) the composition is skewed to polar residues. 3 disordered regions span residues 1-39 (MPTSISTAPLSQGSPPSSLIDYQPQSVPSSSSPPPSTAA), 117-141 (IGSTTNSSLRQSASSGSLQKHSRKA), and 155-190 (LSPPLSDGSGSSEQSSSAPFEPLSAVTEQPNPAAER). 2 stretches are compositionally biased toward low complexity: residues 123–135 (SSLRQSASSGSLQ) and 158–171 (PLSDGSGSSEQSSS). Residues 214–411 (QTSSRLLRMT…QDGPNVKSSV (198 aa)) form a fungal-DR region. The 87-residue stretch at 425–511 (GLVGVKMARE…SKNAIYAITE (87 aa)) folds into the DEP domain. The RGS domain occupies 540–685 (SNNARLNHIL…FLRDPKYSAI (146 aa)). The disordered stretch occupies residues 694-719 (LIGGGRSYSPTPGNVPERSMSRSQRS).

Its function is as follows. Required for asexual sporulation and normal colony development. May be involved in brlA activation. Could play a regulatory role in controlling the flug-initiated signal transduction pathway that triggers the asexual reproduction. This chain is Developmental regulator flbA (flbA), found in Emericella nidulans (strain FGSC A4 / ATCC 38163 / CBS 112.46 / NRRL 194 / M139) (Aspergillus nidulans).